We begin with the raw amino-acid sequence, 116 residues long: NADH-ubiquinone oxidoreductase chain 3 (116 aa).

3 consecutive transmembrane segments (helical) span residues 8 to 28 (VAAT…LPSL), 56 to 76 (FFLV…LLPL), and 87 to 107 (ISLL…IYEW).

This sequence belongs to the complex I subunit 3 family.

Its subcellular location is the mitochondrion membrane. It catalyses the reaction a ubiquinone + NADH + 5 H(+)(in) = a ubiquinol + NAD(+) + 4 H(+)(out). Core subunit of the mitochondrial membrane respiratory chain NADH dehydrogenase (Complex I) that is believed to belong to the minimal assembly required for catalysis. Complex I functions in the transfer of electrons from NADH to the respiratory chain. The immediate electron acceptor for the enzyme is believed to be ubiquinone. This chain is NADH-ubiquinone oxidoreductase chain 3 (MT-ND3), found in Squalus acanthias (Spiny dogfish).